A 151-amino-acid polypeptide reads, in one-letter code: Putative pre-16S rRNA nuclease (151 aa).

This sequence belongs to the YqgF nuclease family.

The protein localises to the cytoplasm. Could be a nuclease involved in processing of the 5'-end of pre-16S rRNA. The protein is Putative pre-16S rRNA nuclease of Chlamydia pneumoniae (Chlamydophila pneumoniae).